A 391-amino-acid chain; its full sequence is Tryptophan synthase beta chain (391 aa).

Lys84 is modified (N6-(pyridoxal phosphate)lysine).

This sequence belongs to the TrpB family. Tetramer of two alpha and two beta chains. The cofactor is pyridoxal 5'-phosphate.

It catalyses the reaction (1S,2R)-1-C-(indol-3-yl)glycerol 3-phosphate + L-serine = D-glyceraldehyde 3-phosphate + L-tryptophan + H2O. The protein operates within amino-acid biosynthesis; L-tryptophan biosynthesis; L-tryptophan from chorismate: step 5/5. In terms of biological role, the beta subunit is responsible for the synthesis of L-tryptophan from indole and L-serine. This chain is Tryptophan synthase beta chain, found in Thermoanaerobacter sp. (strain X514).